The sequence spans 331 residues: D-lactate dehydrogenase (331 aa).

Residues 156-157 (RI), D176, 206-207 (MP), 233-235 (TAR), and D259 contribute to the NAD(+) site. The active site involves R235. The active site involves E264. The active-site Proton donor is the H296.

The protein belongs to the D-isomer specific 2-hydroxyacid dehydrogenase family.

The catalysed reaction is (R)-lactate + NAD(+) = pyruvate + NADH + H(+). In Treponema pallidum (strain Nichols), this protein is D-lactate dehydrogenase (ldhD).